The sequence spans 821 residues: Calpain-3 (821 aa).

The interval 7-37 (ASVAPRTAAEPRSPGPVPHPAQSKATEAGGG) is disordered. Residues 74–417 (LYVDPEFPPD…FTKLEICNLT (344 aa)) form the Calpain catalytic domain. Catalysis depends on residues C129, H334, and N358. Positions 418-586 (ADALQSDKLQ…KRNLSEEVEN (169 aa)) are domain III. A linker region spans residues 587–649 (TISVDRPVKK…QPGSSDQESE (63 aa)). The tract at residues 609–652 (ANSNKELGVDQESEEGKGKTSPDKQKQSPQPQPGSSDQESEEQQ) is disordered. Positions 622 to 634 (EEGKGKTSPDKQK) are enriched in basic and acidic residues. Over residues 635-645 (QSPQPQPGSSD) the composition is skewed to low complexity. 4 EF-hand domains span residues 649–683 (EEQQQFRNIFKQIAGDDMEICADELKKVLNTVVNK), 692–725 (FTLESCRSMIALMDTDGSGKLNLQEFHHLWNKIK), 722–757 (NKIKAWQKIFKHYDTDQSGTINSYEMRNAVNDAGFH), and 787–821 (VRLEGMFRAFHAFDKDGDGIIKLNVLEWLQLTMYA). Residues 650–821 (EQQQFRNIFK…LEWLQLTMYA (172 aa)) are domain IV. The Ca(2+) site is built by A662, D665, E667, E672, D705, D707, S709, K711, E716, D735, D737, S739, T741, E746, D800, D802, D804, and I806.

The protein belongs to the peptidase C2 family. As to quaternary structure, homodimer; via EF-hand domain 4. Interacts with TTN/titin. Interacts with CMYA5; this interaction, which results in CMYA5 proteolysis, may protect CAPN3 from autolysis. Interacts with SIMC1. Interacts with UTP25; the interaction is required for CAPN3 translocation to the nucleolus. In terms of tissue distribution, isoform I is skeletal muscle specific.

The protein localises to the cytoplasm. The protein resides in the nucleus. It is found in the nucleolus. It carries out the reaction Broad endopeptidase activity.. Its activity is regulated as follows. Activated by micromolar concentrations of calcium and inhibited by calpastatin. Functionally, calcium-regulated non-lysosomal thiol-protease. Proteolytically cleaves CTBP1 at 'His-409'. Mediates, with UTP25, the proteasome-independent degradation of p53/TP53. In Homo sapiens (Human), this protein is Calpain-3.